A 241-amino-acid chain; its full sequence is DNA repair protein RecO (241 aa).

The protein belongs to the RecO family.

Its function is as follows. Involved in DNA repair and RecF pathway recombination. The polypeptide is DNA repair protein RecO (Xanthomonas campestris pv. campestris (strain B100)).